A 471-amino-acid chain; its full sequence is Putative multidrug resistance protein MdtD (471 aa).

Residues 1-11 (MTDLPDSTRWQ) are Periplasmic-facing. Residues 12-32 (LWIVAFGFFMQSLDTTIVNTA) traverse the membrane as a helical segment. At 33-48 (LPSMAQSLGESPLHMH) the chain is on the cytoplasmic side. A helical transmembrane segment spans residues 49-69 (MVIVSYVLTVAVMLPASGWLA). The Periplasmic portion of the chain corresponds to 70-76 (DKVGVRN). The helical transmembrane segment at 77–97 (IFFTAIVLFTLGSLFCALSGT) threads the bilayer. Residues 98–101 (LNEL) are Cytoplasmic-facing. Residues 102-124 (LLARALQGVGGAMMVPVGRLTVM) traverse the membrane as a helical segment. The Periplasmic portion of the chain corresponds to 125–137 (KIVPREQYMAAMT). The helical transmembrane segment at 138–158 (FVTLPGQIGPLLGPALGGLLV) threads the bilayer. Residues 159–164 (EYASWH) are Cytoplasmic-facing. The helical transmembrane segment at 165–185 (WIFLINIPVGIIGAIATLMLM) threads the bilayer. The Periplasmic segment spans residues 186–196 (PNYTMQTRRFD). The helical transmembrane segment at 197 to 217 (LSGFLLLAVGMAVLTLALDGS) threads the bilayer. The Cytoplasmic portion of the chain corresponds to 218–224 (KGTGFSP). Residues 225–245 (LAIAGLVAVGVVALVLYLLHA) traverse the membrane as a helical segment. Topologically, residues 246 to 262 (QNNNRALFSLKLFRTRT) are periplasmic. A helical membrane pass occupies residues 263–283 (FSLGLAGSFAGRIGSGMLPFM). Over 284-285 (TP) the chain is Cytoplasmic. Residues 286 to 306 (VFLQIGLGFSPFHAGLMMIPM) form a helical membrane-spanning segment. Topologically, residues 307–341 (VLGSMGMKRIVVQVVNRFGYRWVLVATTLGLSLVT) are periplasmic. A helical membrane pass occupies residues 342–362 (LLFMTTALLGWYYVLPFVLFL). The Cytoplasmic segment spans residues 363-395 (QGMVNSTRFSSMNTLTLKDLPDNLASSGNSLLS). A helical transmembrane segment spans residues 396-416 (MIMQLSMSIGVTIAGLLLGLF). Over 417 to 430 (GSQHVSVDSGTTQT) the chain is Periplasmic. The chain crosses the membrane as a helical span at residues 431-451 (VFMYTWLSMAFIIALPAFVFA). The Cytoplasmic portion of the chain corresponds to 452–471 (RVPSDTHQNVAISRRKRSAQ).

It belongs to the major facilitator superfamily. TCR/Tet family.

The protein localises to the cell inner membrane. The sequence is that of Putative multidrug resistance protein MdtD from Escherichia coli O81 (strain ED1a).